The following is a 385-amino-acid chain: MTLEAIRYSTGKLVIIDQLQLPYVEKYIEVPTSKDAWHAIKKMRVRGAPAIAIVAALALASELHTLMAHDKLSNRAEEVRLFIQEKLDYLVSSRPTAVNLSDAARKLAAHVSDHAEMPNSTGRAVAEAFIQAAEEMLAKDLKDNTNIGKYGAEWIIRNALAGGRSKATILTHCNTGSLATSGYGTALGVIRALASKNALAYAYCTETRPYNQGSRLTAYELVHENLPATLVTDSMVAALLAKAEAAVDAIVVGADRVAANGDTANKIGTYALAVLAKFHGVKFLVAAPLTTIDRSTKSGADIVIEERPASEVTTIKGAVETESSCDRIKLETVRIAAEGIHVWNPAFDVTPSALIDAIITERGVVERGTDGRYNFDGIFEDHSAF.

The active-site Proton donor is aspartate 255.

Belongs to the eIF-2B alpha/beta/delta subunits family. MtnA subfamily.

The protein localises to the cytoplasm. Its subcellular location is the nucleus. The enzyme catalyses 5-(methylsulfanyl)-alpha-D-ribose 1-phosphate = 5-(methylsulfanyl)-D-ribulose 1-phosphate. It participates in amino-acid biosynthesis; L-methionine biosynthesis via salvage pathway; L-methionine from S-methyl-5-thio-alpha-D-ribose 1-phosphate: step 1/6. In terms of biological role, catalyzes the interconversion of methylthioribose-1-phosphate (MTR-1-P) into methylthioribulose-1-phosphate (MTRu-1-P). The polypeptide is Methylthioribose-1-phosphate isomerase (mri1) (Aspergillus clavatus (strain ATCC 1007 / CBS 513.65 / DSM 816 / NCTC 3887 / NRRL 1 / QM 1276 / 107)).